The chain runs to 345 residues: MDFVSKYMSCLSSWGLDLQPGLQSVGAAVLLATGGLFLASRVLTFVRVLLSLFVLPGKPLRSFGPKGSWAVVTGASDGLGKEFALQLARAGFNIVLVSRTASKLATLAEEITAKHSVQTRTLAMDFAANDDTDYEDLKTLVDGLDVSILINNVGKSHDIPVPFALTPEDEMTDIVTINCLGTLRATQLVIPGMMQRRRGLVLTMGSFGGLLPTPLLATYSGSKAFLQQWSTSLGSELEPYGITVELVQAYLITSAMSKVRRTSALIPSPRAFVSSVLSKIGRNGGSPTYSYSSSPYWSHGLMAYFLTCVLQPMGKLVVGQNRTMHEAIRKRALRKAEREKGKKST.

The chain crosses the membrane as a helical span at residues 26 to 46; it reads GAAVLLATGGLFLASRVLTFV. Positions 71, 125, 133, 152, 219, 223, 252, and 254 each coordinate NADP(+). The active-site Proton donor is Tyr-219. Residue Lys-223 is the Lowers pKa of active site Tyr of the active site.

The protein belongs to the short-chain dehydrogenases/reductases (SDR) family.

The protein localises to the endoplasmic reticulum membrane. The catalysed reaction is a very-long-chain (3R)-3-hydroxyacyl-CoA + NADP(+) = a very-long-chain 3-oxoacyl-CoA + NADPH + H(+). It participates in lipid metabolism; fatty acid biosynthesis. Functionally, component of the microsomal membrane bound fatty acid elongation system, which produces the 26-carbon very long-chain fatty acids (VLCFA) from palmitate. Catalyzes the reduction of the 3-ketoacyl-CoA intermediate that is formed in each cycle of fatty acid elongation. VLCFAs serve as precursors for ceramide and sphingolipids. This chain is Very-long-chain 3-oxoacyl-CoA reductase, found in Aspergillus clavatus (strain ATCC 1007 / CBS 513.65 / DSM 816 / NCTC 3887 / NRRL 1 / QM 1276 / 107).